The following is an 81-amino-acid chain: Photosystem I iron-sulfur center (81 aa).

4Fe-4S ferredoxin-type domains follow at residues 2–31 (AHAV…MIPW) and 39–68 (IASA…VRVY). [4Fe-4S] cluster is bound by residues Cys11, Cys14, Cys17, Cys21, Cys48, Cys51, Cys54, and Cys58.

The eukaryotic PSI reaction center is composed of at least 11 subunits. The cofactor is [4Fe-4S] cluster.

The protein localises to the plastid. Its subcellular location is the chloroplast thylakoid membrane. It catalyses the reaction reduced [plastocyanin] + hnu + oxidized [2Fe-2S]-[ferredoxin] = oxidized [plastocyanin] + reduced [2Fe-2S]-[ferredoxin]. In terms of biological role, apoprotein for the two 4Fe-4S centers FA and FB of photosystem I (PSI); essential for photochemical activity. FB is the terminal electron acceptor of PSI, donating electrons to ferredoxin. The C-terminus interacts with PsaA/B/D and helps assemble the protein into the PSI complex. Required for binding of PsaD and PsaE to PSI. PSI is a plastocyanin-ferredoxin oxidoreductase, converting photonic excitation into a charge separation, which transfers an electron from the donor P700 chlorophyll pair to the spectroscopically characterized acceptors A0, A1, FX, FA and FB in turn. This Marchantia polymorpha (Common liverwort) protein is Photosystem I iron-sulfur center.